Here is a 376-residue protein sequence, read N- to C-terminus: Lateral eye opsin (376 aa).

Residues 1–46 are Extracellular-facing; the sequence is MANQLSYSSLGWPYQPNASVVDTMPKEMLYMIHEHWYAFPPMNPLW. N-linked (GlcNAc...) asparagine glycosylation is present at asparagine 17. Residues 47-71 traverse the membrane as a helical segment; it reads YSILGVAMIILGIICVLGNGMVIYL. The Cytoplasmic portion of the chain corresponds to 72 to 83; it reads MMTTKSLRTPTN. The helical transmembrane segment at 84–108 threads the bilayer; sequence LLVVNLAFSDFCMMAFMMPTMTSNC. Residues 109–123 lie on the Extracellular side of the membrane; sequence FAETWILGPFMCEVY. A disulfide bridge links cysteine 120 with cysteine 197. The chain crosses the membrane as a helical span at residues 124–143; it reads GMAGSLFGCASIWSMVMITL. The Cytoplasmic portion of the chain corresponds to 144–162; that stretch reads DRYNVIVRGMAAAPLTHKK. A helical membrane pass occupies residues 163–186; sequence ATLLLLFVWIWSGGWTILPFFGWS. Topologically, residues 187–210 are extracellular; sequence RYVPEGNLTSCTVDYLTKDWSSAS. Residue asparagine 193 is glycosylated (N-linked (GlcNAc...) asparagine). Residues 211–238 form a helical membrane-spanning segment; the sequence is YVVIYGLAVYFLPLITMIYCYFFIVHAV. Topologically, residues 239–274 are cytoplasmic; the sequence is AEHEKQLREQAKKMNVASLRANADQQKQSAECRLAK. A helical transmembrane segment spans residues 275 to 298; it reads VAMMTVGLWFMAWTPYLIISWAGV. Topologically, residues 299–306 are extracellular; the sequence is FSSGTRLT. A helical transmembrane segment spans residues 307 to 331; that stretch reads PLATIWGSVFAKANSCYNPIVYGIS. An N6-(retinylidene)lysine modification is found at lysine 318. At 332–376 the chain is on the cytoplasmic side; the sequence is HPRYKAALYQRFPSLACGSGESGSDVKSEASATTTMEEKPKIPEA. The interval 349–376 is disordered; sequence GSGESGSDVKSEASATTTMEEKPKIPEA. Residues 367-376 show a composition bias toward basic and acidic residues; it reads MEEKPKIPEA.

Belongs to the G-protein coupled receptor 1 family. Opsin subfamily. Post-translationally, phosphorylated on some or all of the serine and threonine residues present in the C-terminal region. In terms of tissue distribution, lateral eye.

The protein localises to the membrane. Visual pigments are the light-absorbing molecules that mediate vision. They consist of an apoprotein, opsin, covalently linked to cis-retinal. In Limulus polyphemus (Atlantic horseshoe crab), this protein is Lateral eye opsin.